Consider the following 920-residue polypeptide: MLEGKMADINFKEVTLIVSVVAACYWNSLFCGFVFDDVSAILDNKDLHPSTPLKTLFQNDFWGTPMSEERSHKSYRPLTVLTFRLNYLLSELKPMSYHLLNTVFHAVVSVIFLKVCRLFLDKRSSMIAALLFAVHPIHTEAVTGVVGRAELLSSVFFLAAFLSYTKSKGPDNSIVWTPIVLTVFLVAVATLCKEQGITVVGICCVYEVFVAQGYTLPMLCTVAGQFLRGKGSIPLSMLQTLVKLIVLMLSTLLLVVVRVQVIQSQLPVFTRFDNPAAVSPTPTRQLTFNYLLPVNAWLLLNPSELCCDWTMGTIPLIESFLDVRNLATFAFFCFLGALGIFSLRYPGDSSKTVLMALCLMALPFIPASNLFFPVGFVVAERVLYVPSMGFCILVAHGWQKISNKSVLKKLSWVCLSMVILTHALKTLHRNWDWESEYTLFMSALKVNKNNAKLWNNVGHALENEKNFEKALKYFLQATHVQPDDIGAHMNVGRTYKNLNRSREAEASYMLAKSLMPQIIPGKKYAARIAPNHLNVYINLANLIRANESRLEEADQLYRQAISMRPDFKQAYISRGELLLKMNKPLKAKEAYLKALELDRNNADLWYNLAIVYIELKEPNEALKNFNRALELNPKHKLALFNSAILMQESGEVKLRPEARKRLLNYVNEEPQDANGYFNLGMLAMDDKKDSEAESWMKKAIKLQPDFRSALFNLALLYSQTAKELKALPILEELLKYYPDHTKGLILKGDILMNQKKDIPGAKKCFEKILEMDPSNVQGKHNLCVVYFEEKELLKAERCLVETLALAPHEEYIQRHLSIVRDRISSSGIVEQPLAPADKTPGTEEREEIPSEDVKEISSESRPPQILKTNNNRNSKSNKQSTENADQDAPHKTTKDIKEIEKKRVAALKRLEEIERILNGE.

Over 1–14 the chain is Cytoplasmic; sequence MLEGKMADINFKEV. Residues 15-35 form a helical membrane-spanning segment; sequence TLIVSVVAACYWNSLFCGFVF. Topologically, residues 36 to 94 are extracellular; it reads DDVSAILDNKDLHPSTPLKTLFQNDFWGTPMSEERSHKSYRPLTVLTFRLNYLLSELKP. A helical membrane pass occupies residues 95 to 115; the sequence is MSYHLLNTVFHAVVSVIFLKV. Residues 116 to 125 are Cytoplasmic-facing; the sequence is CRLFLDKRSS. 2 helical membrane passes run 126-144 and 145-163; these read MIAALLFAVHPIHTEAVTG and VVGRAELLSSVFFLAAFLS. Over 164–171 the chain is Cytoplasmic; the sequence is YTKSKGPD. Residues 172–192 traverse the membrane as a helical segment; it reads NSIVWTPIVLTVFLVAVATLC. The Extracellular segment spans residues 193 to 198; sequence KEQGIT. The chain crosses the membrane as a helical span at residues 199 to 219; sequence VVGICCVYEVFVAQGYTLPML. Over 220-236 the chain is Cytoplasmic; that stretch reads CTVAGQFLRGKGSIPLS. Residues 237–257 traverse the membrane as a helical segment; that stretch reads MLQTLVKLIVLMLSTLLLVVV. At 258-325 the chain is on the extracellular side; the sequence is RVQVIQSQLP…LIESFLDVRN (68 aa). The chain crosses the membrane as a helical span at residues 326–346; the sequence is LATFAFFCFLGALGIFSLRYP. Residues 347 to 358 are Cytoplasmic-facing; that stretch reads GDSSKTVLMALC. Residues 359–379 form a helical membrane-spanning segment; sequence LMALPFIPASNLFFPVGFVVA. Residues 380 to 381 lie on the Extracellular side of the membrane; that stretch reads ER. The helical transmembrane segment at 382 to 402 threads the bilayer; it reads VLYVPSMGFCILVAHGWQKIS. The Cytoplasmic portion of the chain corresponds to 403–409; the sequence is NKSVLKK. The chain crosses the membrane as a helical span at residues 410–428; the sequence is LSWVCLSMVILTHALKTLH. Topologically, residues 429–920 are extracellular; it reads RNWDWESEYT…EEIERILNGE (492 aa). TPR repeat units lie at residues 451-484, 485-518, 534-567, 568-601, 602-635, 673-706, 707-740, 742-775, and 776-809; these read AKLWNNVGHALENEKNFEKALKYFLQATHVQPDD, IGAHMNVGRTYKNLNRSREAEASYMLAKSLMPQI, NVYINLANLIRANESRLEEADQLYRQAISMRPDF, KQAYISRGELLLKMNKPLKAKEAYLKALELDRNN, ADLWYNLAIVYIELKEPNEALKNFNRALELNPKH, ANGYFNLGMLAMDDKKDSEAESWMKKAIKLQPDF, RSALFNLALLYSQTAKELKALPILEELLKYYPDH, KGLILKGDILMNQKKDIPGAKKCFEKILEMDPSN, and VQGKHNLCVVYFEEKELLKAERCLVETLALAPHE. Asparagine 499 carries N-linked (GlcNAc...) asparagine glycosylation. Position 508 is a phosphotyrosine (tyrosine 508). The N-linked (GlcNAc...) asparagine glycan is linked to asparagine 546. The tract at residues 829–897 is disordered; it reads VEQPLAPADK…APHKTTKDIK (69 aa). Residues 840–858 show a composition bias toward basic and acidic residues; that stretch reads PGTEEREEIPSEDVKEISS. The segment covering 867 to 880 has biased composition (low complexity); sequence KTNNNRNSKSNKQS. Positions 887–897 are enriched in basic and acidic residues; that stretch reads DAPHKTTKDIK.

It belongs to the TMTC family.

Its subcellular location is the membrane. It localises to the endoplasmic reticulum. The enzyme catalyses a di-trans,poly-cis-dolichyl beta-D-mannosyl phosphate + L-seryl-[protein] = 3-O-(alpha-D-mannosyl)-L-seryl-[protein] + a di-trans,poly-cis-dolichyl phosphate + H(+). It catalyses the reaction a di-trans,poly-cis-dolichyl beta-D-mannosyl phosphate + L-threonyl-[protein] = 3-O-(alpha-D-mannosyl)-L-threonyl-[protein] + a di-trans,poly-cis-dolichyl phosphate + H(+). It participates in protein modification; protein glycosylation. Transfers mannosyl residues to the hydroxyl group of serine or threonine residues. The 4 members of the TMTC family are O-mannosyl-transferases dedicated primarily to the cadherin superfamily, each member seems to have a distinct role in decorating the cadherin domains with O-linked mannose glycans at specific regions. Also acts as O-mannosyl-transferase on other proteins such as PDIA3. Involved in the positive regulation of proteasomal protein degradation in the endoplasmic reticulum (ER), and the control of ER stress response. This Mus musculus (Mouse) protein is Protein O-mannosyl-transferase TMTC3.